The following is a 303-amino-acid chain: Mycothiol acetyltransferase (303 aa).

N-acetyltransferase domains lie at 4-141 and 154-303; these read ITVR…RSLA and IVLR…ANGA. 1D-myo-inositol 2-(L-cysteinylamino)-2-deoxy-alpha-D-glucopyranoside is bound at residue glutamate 38. Acetyl-CoA is bound at residue 80-82; that stretch reads AAV. 1D-myo-inositol 2-(L-cysteinylamino)-2-deoxy-alpha-D-glucopyranoside-binding residues include glutamate 181, lysine 223, and glutamate 234. Acetyl-CoA is bound by residues 238 to 240 and 245 to 251; these read VGI and QGRGLGR. Tyrosine 272 serves as a coordination point for 1D-myo-inositol 2-(L-cysteinylamino)-2-deoxy-alpha-D-glucopyranoside. An acetyl-CoA-binding site is contributed by 277-282; sequence NTAAVN.

Belongs to the acetyltransferase family. MshD subfamily. Monomer.

It carries out the reaction 1D-myo-inositol 2-(L-cysteinylamino)-2-deoxy-alpha-D-glucopyranoside + acetyl-CoA = mycothiol + CoA + H(+). Catalyzes the transfer of acetyl from acetyl-CoA to desacetylmycothiol (Cys-GlcN-Ins) to form mycothiol. This Nocardia farcinica (strain IFM 10152) protein is Mycothiol acetyltransferase.